The chain runs to 299 residues: Oxygen-dependent coproporphyrinogen-III oxidase (299 aa).

A substrate-binding site is contributed by serine 92. A divalent metal cation is bound by residues histidine 96 and histidine 106. Histidine 106 acts as the Proton donor in catalysis. 108–110 is a binding site for substrate; it reads NVR. A divalent metal cation contacts are provided by histidine 145 and histidine 175. Positions 239-274 are important for dimerization; it reads YVEFNLVYDRGTLFGLQSGGRAESILMSLPPRVRWE. Position 257 to 259 (257 to 259) interacts with substrate; that stretch reads GGR.

It belongs to the aerobic coproporphyrinogen-III oxidase family. Homodimer. Requires a divalent metal cation as cofactor.

The protein resides in the cytoplasm. The enzyme catalyses coproporphyrinogen III + O2 + 2 H(+) = protoporphyrinogen IX + 2 CO2 + 2 H2O. It functions in the pathway porphyrin-containing compound metabolism; protoporphyrin-IX biosynthesis; protoporphyrinogen-IX from coproporphyrinogen-III (O2 route): step 1/1. In terms of biological role, involved in the heme biosynthesis. Catalyzes the aerobic oxidative decarboxylation of propionate groups of rings A and B of coproporphyrinogen-III to yield the vinyl groups in protoporphyrinogen-IX. The protein is Oxygen-dependent coproporphyrinogen-III oxidase of Xanthomonas euvesicatoria pv. vesicatoria (strain 85-10) (Xanthomonas campestris pv. vesicatoria).